Reading from the N-terminus, the 135-residue chain is Succinate dehydrogenase assembly factor 3, mitochondrial (135 aa).

The transit peptide at 1–12 (MRIFTRLLYAAP) directs the protein to the mitochondrion.

The protein belongs to the complex I LYR family. SDHAF3 subfamily. In terms of assembly, interacts with the iron-sulfur protein subunit within the SDH catalytic dimer.

The protein localises to the mitochondrion matrix. Plays an essential role in the assembly of succinate dehydrogenase (SDH), an enzyme complex (also referred to as respiratory complex II) that is a component of both the tricarboxylic acid (TCA) cycle and the mitochondrial electron transport chain, and which couples the oxidation of succinate to fumarate with the reduction of ubiquinone (coenzyme Q) to ubiquinol. Promotes maturation of the iron-sulfur protein subunit of the SDH catalytic dimer, protecting it from the deleterious effects of oxidants. May act together with SDHAF1. In Emericella nidulans (strain FGSC A4 / ATCC 38163 / CBS 112.46 / NRRL 194 / M139) (Aspergillus nidulans), this protein is Succinate dehydrogenase assembly factor 3, mitochondrial.